Reading from the N-terminus, the 1588-residue chain is Paternally-expressed gene 3 protein (1588 aa).

Residues 46 to 128 (HQRFRNLIYV…TLLENYKEMY (83 aa)) enclose the SCAN box domain. Disordered regions lie at residues 128–231 (YQPE…YQNV), 265–304 (GHSH…RRGI), and 317–347 (KFIK…MSDD). Over residues 129-142 (QPEDDNNSDVTSDD) the composition is skewed to acidic residues. 4 stretches are compositionally biased toward basic and acidic residues: residues 143-152 (DMTRNRRESS), 160-181 (FSDR…DRWS), 205-224 (FEMD…RSQD), and 293-304 (PEAKKSTHRRGI). 3 C2H2-type zinc fingers span residues 452–474 (YVCD…QIMH), 505–527 (FECK…RKIH), and 563–585 (YECR…QKIH). The segment covering 588 to 607 (DDKDNEREHERERERERGET) has biased composition (basic and acidic residues). The disordered stretch occupies residues 588 to 608 (DDKDNEREHERERERERGETF). Residues 627–649 (YECKVCGETFLHSSSLKEHQKIH) form a C2H2-type 4 zinc finger. 2 disordered regions span residues 839-889 (VASK…SKNR) and 905-929 (QKSV…SSNV). Basic and acidic residues predominate over residues 868 to 881 (LNDKRQKIPARENP). The segment at 969-991 (YECQECGECFAHSSDLTEHQKIH) adopts a C2H2-type 5 zinc-finger fold. The segment at 1056–1104 (EKSHGEESQGENTDGEETHSEETHGQETIEDPVIQGSDMEDPQKDDPDD) is disordered. Residues 1071-1082 (EETHSEETHGQE) are compositionally biased toward basic and acidic residues. 5 consecutive C2H2-type zinc fingers follow at residues 1107–1129 (YECE…QKVH), 1163–1185 (YECP…QRIH), 1225–1247 (IRCL…MRLH), 1282–1304 (FECA…VTVH), and 1332–1354 (YECK…KELH). Acidic residues predominate over residues 1396-1415 (EPEVEAAEPEVEAAEPEVEA). Residues 1396-1495 (EPEVEAAEPE…GIEDPEEGED (100 aa)) are disordered. 7 consecutive repeat copies span residues 1397-1403 (PEVEAAE), 1404-1410 (PEVEAAE), 1411-1417 (PEVEAAE), 1418-1422 (PNGEA), 1425-1429 (PDGEA), 1432-1436 (PIGEA), and 1439-1443 (PNGEA). The 3 X 7 AA repeat of P-E-V-E-A-A-E stretch occupies residues 1397–1417 (PEVEAAEPEVEAAEPEVEAAE). Residues 1418 to 1443 (PNGEAEGPDGEAAEPIGEAGQPNGEA) form a 4 X 5 AA repeat of P-X-G-E-A region. Composition is skewed to acidic residues over residues 1449–1466 (DADE…ERAE) and 1475–1495 (PEGD…EGED). 2 consecutive C2H2-type zinc fingers follow at residues 1505 to 1527 (YDCH…LKTH) and 1564 to 1586 (FKCD…QNTH).

Belongs to the krueppel C2H2-type zinc-finger protein family. As to quaternary structure, homodimer. Interacts with SIAH1A and SIAH2. Interacts with TRAF2. In terms of tissue distribution, brain, glial cells, astrocytes, embryo, placenta, testis, ovary and uterus. In the placenta it is found in the layer of villous cytotrophoblast cells while in the ovary it is found in the cells of the ovarian stroma including the thecal layers around the follicles. Expression is highly repressed in glioma cell lines.

The protein resides in the nucleus. It is found in the cytoplasm. Induces apoptosis in cooperation with SIAH1A. Acts as a mediator between p53/TP53 and BAX in a neuronal death pathway that is activated by DNA damage. Acts synergistically with TRAF2 and inhibits TNF induced apoptosis through activation of NF-kappa-B. Possesses a tumor suppressing activity in glioma cells. The protein is Paternally-expressed gene 3 protein (PEG3) of Homo sapiens (Human).